A 204-amino-acid chain; its full sequence is Imidazole glycerol phosphate synthase subunit HisH (204 aa).

In terms of domain architecture, Glutamine amidotransferase type-1 spans 1 to 204 (MIKIVDYGLG…MTLLKNFSEI (204 aa)). Cys80 acts as the Nucleophile in catalysis. Active-site residues include His186 and Glu188.

In terms of assembly, heterodimer of HisH and HisF.

It is found in the cytoplasm. It carries out the reaction 5-[(5-phospho-1-deoxy-D-ribulos-1-ylimino)methylamino]-1-(5-phospho-beta-D-ribosyl)imidazole-4-carboxamide + L-glutamine = D-erythro-1-(imidazol-4-yl)glycerol 3-phosphate + 5-amino-1-(5-phospho-beta-D-ribosyl)imidazole-4-carboxamide + L-glutamate + H(+). The catalysed reaction is L-glutamine + H2O = L-glutamate + NH4(+). It functions in the pathway amino-acid biosynthesis; L-histidine biosynthesis; L-histidine from 5-phospho-alpha-D-ribose 1-diphosphate: step 5/9. Functionally, IGPS catalyzes the conversion of PRFAR and glutamine to IGP, AICAR and glutamate. The HisH subunit catalyzes the hydrolysis of glutamine to glutamate and ammonia as part of the synthesis of IGP and AICAR. The resulting ammonia molecule is channeled to the active site of HisF. In Bdellovibrio bacteriovorus (strain ATCC 15356 / DSM 50701 / NCIMB 9529 / HD100), this protein is Imidazole glycerol phosphate synthase subunit HisH.